Consider the following 583-residue polypeptide: Glucosidase 2 subunit beta (583 aa).

Positions 1–26 are cleaved as a signal peptide; the sequence is MVRLNLAVVALAAGALSASASASSSA. A disulfide bridge links C91 with C115. Residues 130–252 adopt a coiled-coil conformation; sequence NRCEKVGKEY…LTLLLDDLAK (123 aa). Positions 455–562 constitute an MRH domain; that stretch reads NKCFSKDMGE…KVATPAVCFP (108 aa). 3 disulfide bridges follow: C457–C470, C519–C548, and C533–C560. Residues 580–583 carry the Prevents secretion from ER motif; the sequence is KDEL.

In terms of assembly, heterodimer of a catalytic subunit alpha and a subunit beta.

It is found in the endoplasmic reticulum. In terms of biological role, subunit of glucosidase 2, which cleaves sequentially the 2 innermost alpha-1,3-linked glucose residues from the Glc(2)Man(9)GlcNAc(2) oligosaccharide precursor of immature glycoproteins in the endoplasmic reticulum (ER). Specifically required for the cleavage of the final glucose. The subunit beta retains the catalytic subunit alpha in the ER. The sequence is that of Glucosidase 2 subunit beta from Mycosarcoma maydis (Corn smut fungus).